Here is a 58-residue protein sequence, read N- to C-terminus: UPF0391 membrane protein Shewmr4_2671 (58 aa).

Transmembrane regions (helical) follow at residues 6-26 and 28-48; these read LMFL…IAGA and AGIA…SLLV.

This sequence belongs to the UPF0391 family.

It is found in the cell membrane. The protein is UPF0391 membrane protein Shewmr4_2671 of Shewanella sp. (strain MR-4).